The sequence spans 333 residues: Glycerol-3-phosphate dehydrogenase [NAD(P)+] (333 aa).

NADPH is bound by residues serine 10, tryptophan 11, histidine 31, arginine 32, and lysine 105. Residues lysine 105, glycine 136, and serine 138 each coordinate sn-glycerol 3-phosphate. Position 140 (alanine 140) interacts with NADPH. Sn-glycerol 3-phosphate-binding residues include lysine 191, aspartate 244, serine 254, arginine 255, and asparagine 256. Catalysis depends on lysine 191, which acts as the Proton acceptor. Residue arginine 255 coordinates NADPH. Residues valine 279 and glutamate 281 each contribute to the NADPH site.

This sequence belongs to the NAD-dependent glycerol-3-phosphate dehydrogenase family.

Its subcellular location is the cytoplasm. The catalysed reaction is sn-glycerol 3-phosphate + NAD(+) = dihydroxyacetone phosphate + NADH + H(+). It carries out the reaction sn-glycerol 3-phosphate + NADP(+) = dihydroxyacetone phosphate + NADPH + H(+). It functions in the pathway membrane lipid metabolism; glycerophospholipid metabolism. Its function is as follows. Catalyzes the reduction of the glycolytic intermediate dihydroxyacetone phosphate (DHAP) to sn-glycerol 3-phosphate (G3P), the key precursor for phospholipid synthesis. The sequence is that of Glycerol-3-phosphate dehydrogenase [NAD(P)+] from Chlorobium phaeobacteroides (strain DSM 266 / SMG 266 / 2430).